Consider the following 46-residue polypeptide: Major urinary protein (46 aa).

Asn15 is a glycosylation site (N-linked (GlcNAc...) asparagine).

Belongs to the calycin superfamily. Lipocalin family. As to expression, found in many tissues including liver, urine, preputial gland, clitoral gland, submandibular gland and salivary gland.

The protein localises to the secreted. Functionally, binds pheromones that are released from drying urine of males. These pheromones affect the sexual behavior of females. Acts as a shuttle for pheromonal communication between individuals of the same species. This is Major urinary protein from Rattus rattus (Black rat).